The primary structure comprises 1028 residues: Sodium/potassium-transporting ATPase subunit alpha-4 (1028 aa).

Residues 1–36 are disordered; sequence MEPGKETAATSEQKPRPTLRASNTNRQPKVKRRKKD. The Cytoplasmic segment spans residues 1-92; that stretch reads MEPGKETAAT…NVLTPPPTTP (92 aa). The segment at 87–89 is interaction with phosphoinositide-3 kinase; that stretch reads PPP. A helical transmembrane segment spans residues 93 to 113; that stretch reads EWIKFCKQLFGGFSLLLWTGS. The Extracellular segment spans residues 114-137; it reads LLCFLAYGIHVSYYQENANKDNLY. A helical transmembrane segment spans residues 138–158; the sequence is LGIVLSAVVIITGCFSYYQEA. At 159 to 294 the chain is on the cytoplasmic side; the sequence is KSSKIMESFK…MGKTPIATEI (136 aa). A helical membrane pass occupies residues 295-314; it reads EHFIHIITAVAVFLGVTFFF. Topologically, residues 315-326 are extracellular; it reads LSLILGYTWLDA. A helical transmembrane segment spans residues 327–344; the sequence is VIFLIGIIVANVPEGLLA. At 345–777 the chain is on the cytoplasmic side; that stretch reads TVTVCLTLTA…EEGRLIFDNL (433 aa). The active-site 4-aspartylphosphate intermediate is the D382. 2 residues coordinate Mg(2+): D722 and D726. The chain crosses the membrane as a helical span at residues 778–797; sequence KKSIAYTLTSNIPEITPFLL. Residues 798 to 807 lie on the Extracellular side of the membrane; it reads FIVLSIPLPL. A helical transmembrane segment spans residues 808-828; it reads GTITILCIDLGTDMVPAISLA. The Cytoplasmic portion of the chain corresponds to 829–848; it reads YETPESDIMKRLPRNPKTDN. A helical transmembrane segment spans residues 849–871; it reads LVNDRLIGMAYGQIGMIQALAGF. The Extracellular segment spans residues 872-923; the sequence is FTYFVILAENGFKPLDLLGIRLYWDDTNLNDLEDTYGQQWTYEQRKVVEFTC. A helical transmembrane segment spans residues 924 to 943; sequence QTAFFISIVIVQWADLIICK. The Cytoplasmic segment spans residues 944 to 956; sequence TRRNSLFKQGMKN. Residue S948 is modified to Phosphoserine; by PKA. The helical transmembrane segment at 957-975 threads the bilayer; that stretch reads KVLIFGLLEETILAACLSY. The Extracellular portion of the chain corresponds to 976–990; sequence IPGMDVALRMYPLKI. A helical transmembrane segment spans residues 991 to 1011; that stretch reads NWWFCALPYSVLIFIYDEVRK. Residues 1012-1028 lie on the Cytoplasmic side of the membrane; sequence LIIRRRPGGWLEKETYY.

Belongs to the cation transport ATPase (P-type) (TC 3.A.3) family. Type IIC subfamily. The sodium/potassium-transporting ATPase is composed of a catalytic alpha subunit, an auxiliary non-catalytic beta subunit and an additional regulatory subunit.

It is found in the cell membrane. The enzyme catalyses K(+)(out) + Na(+)(in) + ATP + H2O = K(+)(in) + Na(+)(out) + ADP + phosphate + H(+). Its activity is regulated as follows. Specifically inhibited by an endogenous cardiac glycoside, ouabain. This is the catalytic component of the active enzyme, which catalyzes the hydrolysis of ATP coupled with the exchange of sodium and potassium ions across the plasma membrane. This action creates the electrochemical gradient of sodium and potassium ions, providing the energy for active transport of various nutrients. Plays a role in sperm motility. This is Sodium/potassium-transporting ATPase subunit alpha-4 (Atp1a4) from Rattus norvegicus (Rat).